The sequence spans 451 residues: Phosphoglucosamine mutase (451 aa).

Serine 103 (phosphoserine intermediate) is an active-site residue. Positions 103, 243, 245, and 247 each coordinate Mg(2+). Serine 103 bears the Phosphoserine mark.

This sequence belongs to the phosphohexose mutase family. It depends on Mg(2+) as a cofactor. Activated by phosphorylation.

The catalysed reaction is alpha-D-glucosamine 1-phosphate = D-glucosamine 6-phosphate. Catalyzes the conversion of glucosamine-6-phosphate to glucosamine-1-phosphate. This Lactiplantibacillus plantarum (strain ATCC BAA-793 / NCIMB 8826 / WCFS1) (Lactobacillus plantarum) protein is Phosphoglucosamine mutase.